Consider the following 352-residue polypeptide: WAT1-related protein At1g11450 (352 aa).

A run of 10 helical transmembrane segments spans residues 14–34 (WPPM…NALV), 46–66 (IIGA…AYFL), 83–103 (FISG…GLSY), 107–127 (TVAC…ALIL), 139–159 (AGMI…FLTF), 187–207 (WLLG…WILF), 219–239 (FSST…LSLY), 253–273 (FVIG…TVAA), 283–303 (VFAS…DFLI), and 308–328 (LYLG…VFLW). EamA domains follow at residues 27–157 (MGSV…ALFL) and 192–335 (LYLV…KETE).

The protein belongs to the drug/metabolite transporter (DMT) superfamily. Plant drug/metabolite exporter (P-DME) (TC 2.A.7.4) family.

Its subcellular location is the membrane. The sequence is that of WAT1-related protein At1g11450 from Arabidopsis thaliana (Mouse-ear cress).